The following is a 702-amino-acid chain: Polyribonucleotide nucleotidyltransferase (702 aa).

Asp-485 and Asp-491 together coordinate Mg(2+). Residues 552 to 612 (PRTEIICIDP…EGVKKAISII (61 aa)) form the KH domain. In terms of domain architecture, S1 motif spans 622 to 690 (GEIYLGKVTK…NQGRINLSRK (69 aa)).

The protein belongs to the polyribonucleotide nucleotidyltransferase family. It depends on Mg(2+) as a cofactor.

The protein resides in the cytoplasm. The enzyme catalyses RNA(n+1) + phosphate = RNA(n) + a ribonucleoside 5'-diphosphate. In terms of biological role, involved in mRNA degradation. Catalyzes the phosphorolysis of single-stranded polyribonucleotides processively in the 3'- to 5'-direction. The chain is Polyribonucleotide nucleotidyltransferase from Clostridium botulinum (strain ATCC 19397 / Type A).